A 497-amino-acid chain; its full sequence is Probable cytosol aminopeptidase (497 aa).

2 residues coordinate Mn(2+): Lys-267 and Asp-272. The active site involves Lys-279. Mn(2+)-binding residues include Asp-290, Asp-349, and Glu-351. Arg-353 is an active-site residue.

This sequence belongs to the peptidase M17 family. The cofactor is Mn(2+).

The protein resides in the cytoplasm. The catalysed reaction is Release of an N-terminal amino acid, Xaa-|-Yaa-, in which Xaa is preferably Leu, but may be other amino acids including Pro although not Arg or Lys, and Yaa may be Pro. Amino acid amides and methyl esters are also readily hydrolyzed, but rates on arylamides are exceedingly low.. It carries out the reaction Release of an N-terminal amino acid, preferentially leucine, but not glutamic or aspartic acids.. Its function is as follows. Presumably involved in the processing and regular turnover of intracellular proteins. Catalyzes the removal of unsubstituted N-terminal amino acids from various peptides. This is Probable cytosol aminopeptidase from Syntrophotalea carbinolica (strain DSM 2380 / NBRC 103641 / GraBd1) (Pelobacter carbinolicus).